The following is a 290-amino-acid chain: ATP synthase gamma chain (290 aa).

It belongs to the ATPase gamma chain family. F-type ATPases have 2 components, CF(1) - the catalytic core - and CF(0) - the membrane proton channel. CF(1) has five subunits: alpha(3), beta(3), gamma(1), delta(1), epsilon(1). CF(0) has three main subunits: a, b and c.

It localises to the cell inner membrane. In terms of biological role, produces ATP from ADP in the presence of a proton gradient across the membrane. The gamma chain is believed to be important in regulating ATPase activity and the flow of protons through the CF(0) complex. This Thiobacillus denitrificans (strain ATCC 25259 / T1) protein is ATP synthase gamma chain.